We begin with the raw amino-acid sequence, 603 residues long: Glutathione-regulated potassium-efflux system protein KefB (603 aa).

The next 13 helical transmembrane spans lie at 5–25 (ALLT…PIAA), 29–49 (IGAV…GLGF), 53–73 (VEAI…IIGL), 87–107 (IFGV…GALY), 115–135 (SALI…LQLM), 152–172 (VLLF…ILAG), 180–202 (WERI…YLVR), 207–227 (FIAA…LVLG), 230–250 (LFME…GILL), 268–288 (GLLL…GILY), 291–311 (IVKI…VLYF), 326–346 (FAGV…AAAS), and 356–376 (PLLL…MQVI). The region spanning 400–521 (EPQVIVVGFG…VRHFSRETFS (122 aa)) is the RCK N-terminal domain.

It belongs to the monovalent cation:proton antiporter 2 (CPA2) transporter (TC 2.A.37) family. KefB subfamily. Interacts with the regulatory subunit KefG.

Its subcellular location is the cell inner membrane. Functionally, pore-forming subunit of a potassium efflux system that confers protection against electrophiles. Catalyzes K(+)/H(+) antiport. In Pectobacterium atrosepticum (strain SCRI 1043 / ATCC BAA-672) (Erwinia carotovora subsp. atroseptica), this protein is Glutathione-regulated potassium-efflux system protein KefB.